Consider the following 478-residue polypeptide: UDP-N-acetylmuramate--L-alanine ligase (478 aa).

125 to 131 contacts ATP; that stretch reads GTHGKTT.

It belongs to the MurCDEF family.

It localises to the cytoplasm. The catalysed reaction is UDP-N-acetyl-alpha-D-muramate + L-alanine + ATP = UDP-N-acetyl-alpha-D-muramoyl-L-alanine + ADP + phosphate + H(+). The protein operates within cell wall biogenesis; peptidoglycan biosynthesis. In terms of biological role, cell wall formation. The protein is UDP-N-acetylmuramate--L-alanine ligase of Dichelobacter nodosus (strain VCS1703A).